Consider the following 63-residue polypeptide: Translational regulator CsrA (63 aa).

Belongs to the CsrA/RsmA family. Homodimer; the beta-strands of each monomer intercalate to form a hydrophobic core, while the alpha-helices form wings that extend away from the core.

It localises to the cytoplasm. Its function is as follows. A key translational regulator that binds mRNA to regulate translation initiation and/or mRNA stability. Mediates global changes in gene expression, shifting from rapid growth to stress survival by linking envelope stress, the stringent response and the catabolite repression systems. Usually binds in the 5'-UTR; binding at or near the Shine-Dalgarno sequence prevents ribosome-binding, repressing translation, binding elsewhere in the 5'-UTR can activate translation and/or stabilize the mRNA. Its function is antagonized by small RNA(s). This chain is Translational regulator CsrA, found in Haemophilus influenzae (strain PittEE).